The sequence spans 306 residues: Voltage-dependent anion channel-forming protein RSc3414 (306 aa).

Helical transmembrane passes span 28 to 48, 50 to 70, 213 to 233, and 239 to 259; these read LFLI…WLPI, VNLS…FLGF, YSVM…FGLV, and FTPV…AIAA.

Belongs to the anion channel-forming bestrophin (TC 1.A.46) family.

It is found in the cell membrane. The polypeptide is Voltage-dependent anion channel-forming protein RSc3414 (Ralstonia nicotianae (strain ATCC BAA-1114 / GMI1000) (Ralstonia solanacearum)).